A 193-amino-acid polypeptide reads, in one-letter code: Ectoine TRAP transporter small permease protein TeaB (193 aa).

A run of 4 helical transmembrane segments spans residues 33–55, 65–82, 103–125, and 145–167; these read ILAL…RFAL, VNRI…GYAA, RALM…YYSV, and IFII…LFTA.

The protein belongs to the TRAP transporter small permease family. The complex comprises the extracytoplasmic solute receptor protein TeaA, and the two transmembrane proteins TeaB and TeaC.

The protein resides in the cell inner membrane. Part of the tripartite ATP-independent periplasmic (TRAP) transport system TeaABC involved in the uptake of ectoine and hydroxyectoine in response to osmotic upshock. Probably functions as a recovery system for synthesized ectoine that leaks out of the cell. In Halomonas elongata (strain ATCC 33173 / DSM 2581 / NBRC 15536 / NCIMB 2198 / 1H9), this protein is Ectoine TRAP transporter small permease protein TeaB (teaB).